The chain runs to 193 residues: Probable 3' cyclic ADP-D-ribose synthase ThsB' (193 aa).

In terms of assembly, homodimer.

The enzyme catalyses NAD(+) = 3'cADPR + nicotinamide + H(+). In terms of biological role, TIR-like domain-containing component of the Thoeris antiviral defense system, composed of ThsA and ThsB and ThsB'. In the presence of NAD(+) produces a signaling molecule that activates cognate ThsA (AC J8G6Z1) to hydrolyze NAD(+). The signaling molecule is a cyclic ADP-D-ribose isomer and may be 3' cyclic ADP-D-ribose (3'cADPR); it is not 2'cADPR. The protein is Probable 3' cyclic ADP-D-ribose synthase ThsB' of Bacillus cereus (strain MSX-D12).